Consider the following 349-residue polypeptide: Autophagy-related protein 3 (349 aa).

The segment at 95-173 (ALVNDGDDFK…IRDSGADSKN (79 aa)) is flexible region. Cysteine 244 serves as the catalytic Glycyl thioester intermediate. A handle region region spans residues 248-325 (SVMKTLLDRA…DQEVAIRVDQ (78 aa)). An ATG8 interaction motif (AIM) motif is present at residues 306–309 (WEEV).

Belongs to the ATG3 family. Monomer. Interacts with ATG8 through an intermediate thioester bond between Cys-244 and the C-terminal Gly of ATG8. Interacts with the C-terminal region of the E1-like ATG7 enzyme. Also interacts with the ATG12-ATG5 conjugate.

The protein localises to the cytoplasm. Its function is as follows. E2 conjugating enzyme required for the cytoplasm to vacuole transport (Cvt) and autophagy. Required for selective autophagic degradation of the nucleus (nucleophagy) as well as for mitophagy which contributes to regulate mitochondrial quantity and quality by eliminating the mitochondria to a basal level to fulfill cellular energy requirements and preventing excess ROS production. Responsible for the E2-like covalent binding of phosphatidylethanolamine to the C-terminal Gly of ATG8. The ATG12-ATG5 conjugate plays a role of an E3 and promotes the transfer of ATG8 from ATG3 to phosphatidylethanolamine (PE). This step is required for the membrane association of ATG8. The formation of the ATG8-phosphatidylethanolamine conjugate is essential for autophagy and for the cytoplasm to vacuole transport (Cvt). The ATG8-PE conjugate mediates tethering between adjacent membranes and stimulates membrane hemifusion, leading to expansion of the autophagosomal membrane during autophagy. Autophagy is required for proper vegetative growth, asexual/sexual reproduction, and full virulence. Autophagy is particularly involved in the biosynthesis of deoxynivalenol (DON), an important virulence determinant. The chain is Autophagy-related protein 3 from Gibberella zeae (strain ATCC MYA-4620 / CBS 123657 / FGSC 9075 / NRRL 31084 / PH-1) (Wheat head blight fungus).